Here is a 544-residue protein sequence, read N- to C-terminus: Pentatricopeptide repeat-containing protein At1g66345, mitochondrial (544 aa).

The N-terminal 116 residues, 1–116, are a transit peptide targeting the mitochondrion; it reads MASALRRLVE…RNLRHGIKSY (116 aa). PPR repeat units follow at residues 163–197, 198–232, 233–267, 268–302, 303–337, 338–372, 373–407, 408–442, 443–477, 478–512, and 513–544; these read TPLV…GFTL, SVIT…RIYP, NEIT…RCLP, SVIV…NMVV, DTIG…GFSA, NSFV…GVSP, YDET…GLMP, SCSA…GFVP, DEHT…KMSP, GFEV…LIEP, and NADI…ISVR.

Belongs to the PPR family. P subfamily.

Its subcellular location is the mitochondrion. The polypeptide is Pentatricopeptide repeat-containing protein At1g66345, mitochondrial (Arabidopsis thaliana (Mouse-ear cress)).